The following is a 1690-amino-acid chain: MSGAPPYNPQSPTQQSRYPVYSPPNKNRPFYSNNDQYQQHPPHTPPAYPSQPAAMSRSPHHPHAQSPLPGTLPPLNGAAPPPHHPDASSQFQPHAAAGTPQYSLPRPYSGSVLSSNGTTPYGPSTASHAHPSARPDGPPHLSPKKEMEPSFSMGSHGVPGYPPSAMREPRLASPPKEVKPARAADPMSFASILSGPTEDRPPPRKPSPPEVAPAPLALAPASAARQSPPLPISARAPPLSKEPEPAPVTPLPRLEKKPSSEKRRRNVDQEPKMGELSVPPTNGLLDPAKAAVQPRAPPRKTLSERETEYINRVMAELDSMEKSDVESPGFEWELERYTAKGKKRAMDAERAESVRRKRRRHDFLIKLGKTFEKQASAGMDRFRMANESSVVAEVQAKEVQDEKERKKDMQRKRRRENTVRLEMQKKLEAERKANKAQDSAEKAKFLREAERAQRKIKTTKRALEGVTAPEEIGEVTPLAPNLEGGTTSSFHIGRSPSRRKSGRGGPVTRPKKSKEQKQAEKDAAEAAYAALENEELLPLAPRDDRKDVLRKDGKGVLSKEATPIPLSSYESKGYNQIYEQIWRDIARKDIPKVYRIKVLSLSTRQENLRKTAQLASKQSRKWQERTNKSMKDTQARAKRTMREMMSFWKRNEREERDLRRLAEKQEIESAKKAEAEREANRQRRKLNFLISQTELYSHFIGRKIKGAEGDESGDTAVEGANEAAQSKMDVPAGALKAGAGVTNFEDLDFDAEDETALQQAAMANAQNAVQQAQDRARAFNNTKDDPMAAMDEGELNFQNPTSLGDIEISQPSMLTAKLKEYQLKGLNWLVNLYEQGINGILADEMGLGKTIQSISVMAYLAEVHNIWGPFLVIAPASTLHNWQQEITKFVPDIKVLPYWGSAKDRKILRKFWDRKHITYTKESEFHVLVTSYQLVVLDAQYFQKVKWQYMILDEAQAIKSSQSSRWKNLLGFHCRNRLLLTGTPIQNNMQELWALLHFIMPTLFDSHDEFSEWFSKDIESHAQSNTKLNEDQLKRLHMILKPFMLRRVKKHVQQELGDKVEKDVFCDLTYRQRAYYTGLRDRVSIMDLIEKAAVGDEADSTTLMNLVMQFRKVCNHPDLFERAETKSPLTTAYFAETASFVREGQFVDVGYSTRSLIEYPLPRLLCSSAGRVDVAGPDNLHAGFRGKYLAHMMNVFAPENIKQSIQEDGAFSFLRFIDTSMGDAYEQSHRGVFERALSRRGQPNRLSRLNVVYEEDEGDAPLAHTMLNIVARNDQSAVHEITPDGYMRELMTVSQSTFEREGLNVIEPCASPAASAPPVTITSSSPAAQIEMSDALFNVPVRHALFSTPTRQLEEQILEKKLDPVPYSHPPMLPKPTSLKGRYTHIEVPSMRRFVTDSGKLAKLDELLRELKAGGHRVLLYFQMTRMIDLMEEYLTYRNYKYCRLDGSTKLEDRRDTVADFQQRPEIFVFLLSTRAGGLGINLTAADTVIFYDSDWNPTIDSQAMDRAHRLGQTRQVTVYRLITRGTIEERIRKRALQKEEVQRVVITGGAAGGVDFNTRNRESRTKDIAMWLADDEQAELIEQKEKEALDRGEVFGASKGGKKAAQKRKRDITLDDMYHEGEGNFDDASAKPSGAATPVSTADVGGTPSSTPVPKRGRGRGTGKGTSKRAKTTKERLRLIDGDGGLGPM.

Disordered stretches follow at residues 1 to 306 (MSGA…SERE), 395 to 527 (QAKE…AEAA), and 618 to 637 (QSRK…QARA). Polar residues-rich tracts occupy residues 30-41 (FYSNNDQYQQHP) and 111-127 (SVLS…STAS). Over residues 213-227 (PAPLALAPASAARQS) the composition is skewed to low complexity. 5 stretches are compositionally biased toward basic and acidic residues: residues 253–273 (RLEK…EPKM), 395–407 (QAKE…ERKK), 416–453 (ENTV…ERAQ), 513–524 (SKEQKQAEKDAA), and 621–635 (KWQE…DTQA). Positions 392–468 (AEVQAKEVQD…TKRALEGVTA (77 aa)) form a coiled coil. The DBINO domain maps to 581 to 706 (IWRDIARKDI…SHFIGRKIKG (126 aa)). Residues 623–694 (QERTNKSMKD…KLNFLISQTE (72 aa)) adopt a coiled-coil conformation. The 173-residue stretch at 830–1002 (VNLYEQGING…WALLHFIMPT (173 aa)) folds into the Helicase ATP-binding domain. 843–850 (DEMGLGKT) contributes to the ATP binding site. Residues 953 to 956 (DEAQ) carry the DEAQ box motif. The Helicase C-terminal domain occupies 1403–1563 (KLDELLRELK…GVDFNTRNRE (161 aa)). A disordered region spans residues 1619-1690 (YHEGEGNFDD…IDGDGGLGPM (72 aa)). Basic residues predominate over residues 1656–1672 (KRGRGRGTGKGTSKRAK). The span at 1673–1682 (TTKERLRLID) shows a compositional bias: basic and acidic residues.

This sequence belongs to the SNF2/RAD54 helicase family. In terms of assembly, component of the INO80 chromatin-remodeling complex.

The protein localises to the nucleus. The catalysed reaction is ATP + H2O = ADP + phosphate + H(+). ATPase component of the INO80 complex which remodels chromatin by shifting nucleosomes and is involved in DNA repair. The protein is Chromatin-remodeling ATPase INO80 (ino80) of Aspergillus terreus (strain NIH 2624 / FGSC A1156).